The chain runs to 298 residues: ATP phosphoribosyltransferase (298 aa).

It belongs to the ATP phosphoribosyltransferase family. Long subfamily. It depends on Mg(2+) as a cofactor.

Its subcellular location is the cytoplasm. The enzyme catalyses 1-(5-phospho-beta-D-ribosyl)-ATP + diphosphate = 5-phospho-alpha-D-ribose 1-diphosphate + ATP. The protein operates within amino-acid biosynthesis; L-histidine biosynthesis; L-histidine from 5-phospho-alpha-D-ribose 1-diphosphate: step 1/9. With respect to regulation, feedback inhibited by histidine. Functionally, catalyzes the condensation of ATP and 5-phosphoribose 1-diphosphate to form N'-(5'-phosphoribosyl)-ATP (PR-ATP). Has a crucial role in the pathway because the rate of histidine biosynthesis seems to be controlled primarily by regulation of HisG enzymatic activity. The polypeptide is ATP phosphoribosyltransferase (Vibrio parahaemolyticus serotype O3:K6 (strain RIMD 2210633)).